The primary structure comprises 724 residues: Probable serine/threonine-protein kinase KKQ8 (724 aa).

2 disordered regions span residues 1–81 (MVMQ…RQRS) and 93–188 (HPFR…KDIL). A Phosphoserine modification is found at serine 19. Over residues 45-54 (PYRSSSTSPK) the composition is skewed to low complexity. The segment covering 95-106 (FRQTGSGASNSP) has biased composition (polar residues). The segment covering 143–162 (RSSSVSSCDSSNGTTSSSDS) has biased composition (low complexity). Phosphoserine is present on residues serine 232, serine 238, and serine 241. 2 stretches are compositionally biased toward polar residues: residues 318-329 (NASSLLPNVEKS) and 338-351 (GQSP…SPTQ). The tract at residues 318-355 (NASSLLPNVEKSQTNHEKRTGQSPNDSNRSSPTQGRED) is disordered. The Protein kinase domain occupies 412–712 (GHPVGLVGAG…VGKLLDMQWM (301 aa)). ATP-binding positions include 418–426 (VGAGAYGEV) and lysine 455. Catalysis depends on aspartate 563, which acts as the Proton acceptor.

It belongs to the protein kinase superfamily. CAMK Ser/Thr protein kinase family. NPR/HAL subfamily. HAL5 sub-subfamily.

Its subcellular location is the cytoplasm. The catalysed reaction is L-seryl-[protein] + ATP = O-phospho-L-seryl-[protein] + ADP + H(+). It catalyses the reaction L-threonyl-[protein] + ATP = O-phospho-L-threonyl-[protein] + ADP + H(+). This Saccharomyces cerevisiae (strain YJM789) (Baker's yeast) protein is Probable serine/threonine-protein kinase KKQ8 (KKQ8).